We begin with the raw amino-acid sequence, 192 residues long: Probable apo-citrate lyase phosphoribosyl-dephospho-CoA transferase (192 aa).

The protein belongs to the CitX family.

The enzyme catalyses apo-[citrate lyase ACP] + 2'-(5''-triphospho-alpha-D-ribosyl)-3'-dephospho-CoA = holo-[citrate lyase ACP] + diphosphate. In terms of biological role, transfers 2-(5''-triphosphoribosyl)-3'-dephosphocoenzyme-A on a serine residue to the apo-acyl carrier protein (gamma chain) of the citrate lyase to yield holo-acyl carrier protein. The chain is Probable apo-citrate lyase phosphoribosyl-dephospho-CoA transferase from Streptococcus pyogenes serotype M6 (strain ATCC BAA-946 / MGAS10394).